The primary structure comprises 336 residues: Cellodextrinase A (336 aa).

Catalysis depends on Glu-141, which acts as the Proton donor.

The protein belongs to the glycosyl hydrolase 5 (cellulase A) family.

The protein localises to the secreted. Functionally, crystalline cellulose degradation. The protein is Cellodextrinase A (celA) of Ruminococcus flavefaciens.